We begin with the raw amino-acid sequence, 395 residues long: Lipoyl synthase, mitochondrial (395 aa).

A mitochondrion-targeting transit peptide spans 1–14; that stretch reads MISLRSISRSPAVQ. Residues Cys112, Cys117, Cys123, Cys142, Cys146, Cys149, and Ser357 each coordinate [4Fe-4S] cluster. The region spanning 127 to 346 is the Radical SAM core domain; it reads KKSEATATIM…RDTALQMGFL (220 aa).

It belongs to the radical SAM superfamily. Lipoyl synthase family. [4Fe-4S] cluster serves as cofactor.

It is found in the mitochondrion. It catalyses the reaction [[Fe-S] cluster scaffold protein carrying a second [4Fe-4S](2+) cluster] + N(6)-octanoyl-L-lysyl-[protein] + 2 oxidized [2Fe-2S]-[ferredoxin] + 2 S-adenosyl-L-methionine + 4 H(+) = [[Fe-S] cluster scaffold protein] + N(6)-[(R)-dihydrolipoyl]-L-lysyl-[protein] + 4 Fe(3+) + 2 hydrogen sulfide + 2 5'-deoxyadenosine + 2 L-methionine + 2 reduced [2Fe-2S]-[ferredoxin]. Its pathway is protein modification; protein lipoylation via endogenous pathway; protein N(6)-(lipoyl)lysine from octanoyl-[acyl-carrier-protein]: step 2/2. Catalyzes the radical-mediated insertion of two sulfur atoms into the C-6 and C-8 positions of the octanoyl moiety bound to the lipoyl domains of lipoate-dependent enzymes, thereby converting the octanoylated domains into lipoylated derivatives. This chain is Lipoyl synthase, mitochondrial, found in Debaryomyces hansenii (strain ATCC 36239 / CBS 767 / BCRC 21394 / JCM 1990 / NBRC 0083 / IGC 2968) (Yeast).